Here is a 216-residue protein sequence, read N- to C-terminus: MKFFLDTANVDEIREANALGVISGVTTNPSLIAKEGRDFIEVVKEITQIVDGPISAEVISDDSEGMIREARELAKIHKNIVIKIPMTAEGLKAVNVLSKEGIKTNVTLIFTANQALLAARAGATYVSPFVGRLDDINTDGLQIIEDIVTIFNNYDIDTEIITASVRHPIHVLQAAKLGAHIATVPYKVLMQMVKHPLTDAGIERFKEDWRKAGLKI.

Lys83 acts as the Schiff-base intermediate with substrate in catalysis.

It belongs to the transaldolase family. Type 3B subfamily.

Its subcellular location is the cytoplasm. It catalyses the reaction D-sedoheptulose 7-phosphate + D-glyceraldehyde 3-phosphate = D-erythrose 4-phosphate + beta-D-fructose 6-phosphate. The protein operates within carbohydrate degradation; pentose phosphate pathway; D-glyceraldehyde 3-phosphate and beta-D-fructose 6-phosphate from D-ribose 5-phosphate and D-xylulose 5-phosphate (non-oxidative stage): step 2/3. Transaldolase is important for the balance of metabolites in the pentose-phosphate pathway. The chain is Probable transaldolase from Thermoanaerobacter sp. (strain X514).